A 185-amino-acid polypeptide reads, in one-letter code: Crossover junction endodeoxyribonuclease RuvC (185 aa).

Catalysis depends on residues Asp7, Glu66, and Asp137. Mg(2+)-binding residues include Asp7, Glu66, and Asp137.

This sequence belongs to the RuvC family. As to quaternary structure, homodimer which binds Holliday junction (HJ) DNA. The HJ becomes 2-fold symmetrical on binding to RuvC with unstacked arms; it has a different conformation from HJ DNA in complex with RuvA. In the full resolvosome a probable DNA-RuvA(4)-RuvB(12)-RuvC(2) complex forms which resolves the HJ. Mg(2+) is required as a cofactor.

It is found in the cytoplasm. It catalyses the reaction Endonucleolytic cleavage at a junction such as a reciprocal single-stranded crossover between two homologous DNA duplexes (Holliday junction).. Its function is as follows. The RuvA-RuvB-RuvC complex processes Holliday junction (HJ) DNA during genetic recombination and DNA repair. Endonuclease that resolves HJ intermediates. Cleaves cruciform DNA by making single-stranded nicks across the HJ at symmetrical positions within the homologous arms, yielding a 5'-phosphate and a 3'-hydroxyl group; requires a central core of homology in the junction. The consensus cleavage sequence is 5'-(A/T)TT(C/G)-3'. Cleavage occurs on the 3'-side of the TT dinucleotide at the point of strand exchange. HJ branch migration catalyzed by RuvA-RuvB allows RuvC to scan DNA until it finds its consensus sequence, where it cleaves and resolves the cruciform DNA. The polypeptide is Crossover junction endodeoxyribonuclease RuvC (Anaeromyxobacter dehalogenans (strain 2CP-C)).